Reading from the N-terminus, the 148-residue chain is Macrodomain Ter protein (148 aa).

Belongs to the MatP family. As to quaternary structure, homodimer.

It is found in the cytoplasm. In terms of biological role, required for spatial organization of the terminus region of the chromosome (Ter macrodomain) during the cell cycle. Prevents early segregation of duplicated Ter macrodomains during cell division. Binds specifically to matS, which is a 13 bp signature motif repeated within the Ter macrodomain. The protein is Macrodomain Ter protein of Aliivibrio salmonicida (strain LFI1238) (Vibrio salmonicida (strain LFI1238)).